The sequence spans 417 residues: Mast cell carboxypeptidase A (417 aa).

The N-terminal stretch at 1–15 is a signal peptide; the sequence is MRLILPVGLIATTLA. Residues 16–109 constitute a propeptide, activation peptide; sequence IAPVRFDREK…IEKQFDVKED (94 aa). One can recognise a Peptidase M14 domain in the interval 118–412; the sequence is KYNNWEKIVA…LAVKFIAKYI (295 aa). Disulfide bonds link cysteine 173–cysteine 186 and cysteine 245–cysteine 268. The Zn(2+) site is built by histidine 176 and glutamate 179. Histidine 304 provides a ligand contact to Zn(2+). The active-site Proton donor/acceptor is the glutamate 378.

The protein belongs to the peptidase M14 family. The cofactor is Zn(2+).

It localises to the cytoplasmic vesicle. The protein localises to the secretory vesicle. The catalysed reaction is Release of a C-terminal amino acid, but little or no action with -Asp, -Glu, -Arg, -Lys or -Pro.. The polypeptide is Mast cell carboxypeptidase A (CPA3) (Homo sapiens (Human)).